Consider the following 492-residue polypeptide: MDPYRVRPSSAHDSPFFTTNSGAPVWNNNSSLTVGTRGPILLEDYHLLEKLANFDRERIPERVVHARGASAKGFFEVTHDITQLTSADFLRGPGVQTPVIVRFSTVIHERGSPETLRDPRGFAVKFYTREGNFDLVGNNFPVFFVRDGMKFPDMVHALKPNPKSHIQENWRILDFFSHHPESLHMFSFLFDDLGIPQDYRHMEGAGVNTYMLINKAGKAHYVKFHWKPTCGIKCLSDEEAIRVGGANHSHATKDLYDSIAAGNYPQWNLFVQVMDPAHEDKFDFDPLDVTKIWPEDILPLQPVGRLVLNKNIDNFFNENEQIAFCPALVVPGIHYSDDKLLQTRIFSYADSQRHRLGPNYLQLPVNAPKCAHHNNHHDGFMNFMHRDEEVNYFPSRLDPVRHAEKYPTTPIVCSGNREKCFIGKENNFKQPGERYRSWDSDRQERFVKRFVEALSEPRVTHEIRSIWISYWSQADKSLGQKLATRLNVRPNF.

Active-site residues include His65 and Asn138. Position 348 (Tyr348) interacts with heme.

The protein belongs to the catalase family. As to quaternary structure, homotetramer and heterotetramer. At least six or seven isozymes are produced from a mixture of 3 gene products. Interacts with NCA1. Interacts with LSD1. Requires heme as cofactor.

The protein localises to the cytoplasm. The catalysed reaction is 2 H2O2 = O2 + 2 H2O. In terms of biological role, occurs in almost all aerobically respiring organisms and serves to protect cells from the toxic effects of hydrogen peroxide. In Arabidopsis thaliana (Mouse-ear cress), this protein is Catalase-1 (CAT1).